Reading from the N-terminus, the 578-residue chain is MNNVIDFWPTLKRLLYYGTNVKKYLILGFTLLLFSSIFEVLNPILISCFIKHYFINNTVNYSLKIITYYLILQILAAILNYHQNIIFNKISLTVIQKLRYDVMSSTLQLPIKMFDQRPIGQFISRITNDTETIKELYDTVIKSLFQNIILILITLITMFILEWRMACIASIIFPIALIIMLLYQYFSKPILRKIKVYIANIYNIFNEIINGIDVIQQFHQEQKFRKSIKKISISHYYFRMKILKLDSFLLRPLLNFCSTLILCGLILIFGIYPIGFFEIGTLYAFITYLNRLNEPLITITSQQSIFQQAIVAGERIFEIIHTPKQQYGDDSLHFREGNIKVKNLYFSYTNNNVYVLKNINIFIPSKQFIAFVGRTGSGKSTLSKLLIGHYPATLGKICLDERNIQTFTHNVLKKNISIVQQDPIILNDTILENITLGRNISTKKVLKILKTIKLIQFVNSLPKGLKTLLGENGNILSIGQKQLLSIARTLISCPKILILDEATSNVDLDTENNIKKILSSVKHLTTIIAITHRLSTIKHADNIFVFNNGEIVESGTHYNLIRKKSYYKNMYYSQAIKN.

Positions 25–308 constitute an ABC transmembrane type-1 domain; sequence LILGFTLLLF…ITSQQSIFQQ (284 aa). Transmembrane regions (helical) follow at residues 26 to 46, 59 to 79, 143 to 163, 166 to 186, 196 to 216, and 260 to 280; these read ILGF…PILI, VNYS…AAIL, SLFQ…ILEW, ACIA…YQYF, VYIA…DVIQ, and LILC…FEIG. Positions 339–573 constitute an ABC transporter domain; that stretch reads IKVKNLYFSY…KSYYKNMYYS (235 aa). 373-380 provides a ligand contact to ATP; that stretch reads GRTGSGKS.

It belongs to the ABC transporter superfamily. Drug exporter-2 (TC 3.A.1.117) family.

It is found in the cell membrane. It catalyses the reaction ATP + H2O + xenobioticSide 1 = ADP + phosphate + xenobioticSide 2.. This Buchnera aphidicola subsp. Baizongia pistaciae (strain Bp) protein is Multidrug resistance-like ATP-binding protein MdlB (mdlB).